A 234-amino-acid polypeptide reads, in one-letter code: GTP-binding protein ypt4 (234 aa).

16 to 23 (GPSGTGKS) provides a ligand contact to GTP. An Effector region motif is present at residues 39–47 (SHTVGIDFA). Residue 68 to 72 (DTAGQ) participates in GTP binding. 2 S-geranylgeranyl cysteine lipidation sites follow: cysteine 233 and cysteine 234.

It belongs to the small GTPase superfamily. Rab family.

Its subcellular location is the cell membrane. The polypeptide is GTP-binding protein ypt4 (ypt4) (Schizosaccharomyces pombe (strain 972 / ATCC 24843) (Fission yeast)).